The sequence spans 304 residues: Recombination-associated protein RdgC (304 aa).

It belongs to the RdgC family.

The protein resides in the cytoplasm. It localises to the nucleoid. Functionally, may be involved in recombination. This Dechloromonas aromatica (strain RCB) protein is Recombination-associated protein RdgC.